Reading from the N-terminus, the 335-residue chain is MATIHRPRRGSLAFSPRKRAKSQVPRTRYWAAGEEKARMDGFAGYKAGMTHIIMIDDKPNSLTEGMEISVPVTILETPPLSIAALRVYEKYNGGVRAAGEAWSDKLDPSLARSITVPKNKRGAAIDEIGAIIEDMEELRLIAHTNPKLLTGVPKKNPDLMEIQVNGGNIANQFELAKSLLGSSVPISSIFSPGSIIDVSAITKGKGVQGPVKRWGINLQKRKHSRGGKRRHIGNLGPWNPHHVRWTVPLLGQMGYHQRTEFNKRVLAIGSDGGAITPDGGFPGYGIIRGEYAILSGSVPGPSKRLVRMRSAVRAKDADLKTPQVLYVSRDSKQGL.

A disordered region spans residues 1–20 (MATIHRPRRGSLAFSPRKRA).

Belongs to the universal ribosomal protein uL3 family. In terms of assembly, part of the 50S ribosomal subunit. Forms a cluster with proteins L14 and L24e.

Functionally, one of the primary rRNA binding proteins, it binds directly near the 3'-end of the 23S rRNA, where it nucleates assembly of the 50S subunit. In Methanothrix harundinacea (strain 6Ac) (Methanosaeta harundinacea), this protein is Large ribosomal subunit protein uL3 (rpl3).